The following is a 259-amino-acid chain: Bis(5'-nucleosyl)-tetraphosphatase, symmetrical (259 aa).

Belongs to the Ap4A hydrolase family.

The catalysed reaction is P(1),P(4)-bis(5'-adenosyl) tetraphosphate + H2O = 2 ADP + 2 H(+). In terms of biological role, hydrolyzes diadenosine 5',5'''-P1,P4-tetraphosphate to yield ADP. The chain is Bis(5'-nucleosyl)-tetraphosphatase, symmetrical (apaH) from Klebsiella aerogenes (Enterobacter aerogenes).